The primary structure comprises 393 residues: MIMVAREKDLMMVSMGPHHPSMHGVLRLIVTLDGEDVIDCEPVLGYLHRGMEKIAENRTIVQYLPYVTRWDYLATMFTEAITVNAPEKLENIQIPKRASYIRMIMLELSRIASHLLWLGPFMADIGAQTPFFYILREREMIYDLFEAATGMRMMHNYFRIGGVAVDLPYGWIDKCLDFCYYFFPKVTEYERLITRNPIFLKRVEGVGIISREEAIDWSLSGPMLRASGIQWDLRKVDHYECYDELDWEIQWQKEGDSLARYLLRIGEMKESIKIIRQALEVIPGGPYENLEVRRLNKGKDSQWNDFESRFISKKPSPTFELSKQEHYVRVEAPKGELGIFFIGDDNIFPWRWKIRPPGFINLQIPPQLVKRMKLADIMTILGSIDIIMGEVDR.

Belongs to the complex I 49 kDa subunit family. NDH is composed of at least 16 different subunits, 5 of which are encoded in the nucleus.

The protein localises to the plastid. Its subcellular location is the chloroplast thylakoid membrane. The catalysed reaction is a plastoquinone + NADH + (n+1) H(+)(in) = a plastoquinol + NAD(+) + n H(+)(out). The enzyme catalyses a plastoquinone + NADPH + (n+1) H(+)(in) = a plastoquinol + NADP(+) + n H(+)(out). In terms of biological role, NDH shuttles electrons from NAD(P)H:plastoquinone, via FMN and iron-sulfur (Fe-S) centers, to quinones in the photosynthetic chain and possibly in a chloroplast respiratory chain. The immediate electron acceptor for the enzyme in this species is believed to be plastoquinone. Couples the redox reaction to proton translocation, and thus conserves the redox energy in a proton gradient. This chain is NAD(P)H-quinone oxidoreductase subunit H, chloroplastic, found in Cryptomeria japonica (Japanese cedar).